The following is a 218-amino-acid chain: Molybdenum cofactor guanylyltransferase (218 aa).

GTP is bound by residues 16 to 18, Lys28, Asn56, Asp74, and Asp109; that span reads LAG. A Mg(2+)-binding site is contributed by Asp109.

The protein belongs to the MobA family. Monomer. Requires Mg(2+) as cofactor.

Its subcellular location is the cytoplasm. The enzyme catalyses Mo-molybdopterin + GTP + H(+) = Mo-molybdopterin guanine dinucleotide + diphosphate. Transfers a GMP moiety from GTP to Mo-molybdopterin (Mo-MPT) cofactor (Moco or molybdenum cofactor) to form Mo-molybdopterin guanine dinucleotide (Mo-MGD) cofactor. This Sinorhizobium fredii (strain NBRC 101917 / NGR234) protein is Molybdenum cofactor guanylyltransferase.